The following is a 603-amino-acid chain: Replication protein A 70 kDa DNA-binding subunit (603 aa).

A disordered region spans residues Pro-131–Asn-152. At Ser-160 the chain carries Phosphoserine. The OB DNA-binding region spans Trp-179–Ser-252. The residue at position 420 (Ser-420) is a Phosphoserine. The C4-type zinc-finger motif lies at Cys-464–Cys-486.

The protein belongs to the replication factor A protein 1 family. As to quaternary structure, component of the heterotrimeric canonical replication protein A complex (RPA).

It localises to the nucleus. Functionally, as part of the heterotrimeric replication protein A complex (RPA/RP-A), binds and stabilizes single-stranded DNA intermediates, that form during DNA replication or upon DNA stress. It prevents their reannealing and in parallel, recruits and activates different proteins and complexes involved in DNA metabolism. Thereby, it plays an essential role both in DNA replication and the cellular response to DNA damage. This is Replication protein A 70 kDa DNA-binding subunit from Drosophila melanogaster (Fruit fly).